The primary structure comprises 322 residues: Probable ethanolamine-phosphate cytidylyltransferase (322 aa).

The protein belongs to the cytidylyltransferase family.

It catalyses the reaction phosphoethanolamine + CTP + H(+) = CDP-ethanolamine + diphosphate. The protein operates within phospholipid metabolism; phosphatidylethanolamine biosynthesis; phosphatidylethanolamine from ethanolamine: step 2/3. The polypeptide is Probable ethanolamine-phosphate cytidylyltransferase (MUQ1) (Encephalitozoon cuniculi (strain GB-M1) (Microsporidian parasite)).